A 404-amino-acid chain; its full sequence is SAC3 domain-containing protein 1 (404 aa).

Disordered regions lie at residues 1-58 (MAGR…GTCP) and 77-117 (RLEV…QLRP). The segment covering 12 to 21 (PPRPAAPHPR) has biased composition (pro residues). A compositionally biased stretch (basic and acidic residues) spans 87–101 (DPPRADPQRAVKEYS). The region spanning 203-379 (QVQEGFGSLR…TCKVLVESKL (177 aa)) is the PCI domain. Residue S402 is modified to Phosphoserine.

It belongs to the SAC3 family. In terms of assembly, may be part of a SEM1-containing complex.

It is found in the cytoplasm. The protein resides in the cytoskeleton. The protein localises to the microtubule organizing center. Its subcellular location is the centrosome. It localises to the spindle. Functionally, involved in centrosome duplication and mitotic progression. This chain is SAC3 domain-containing protein 1 (SAC3D1), found in Homo sapiens (Human).